Reading from the N-terminus, the 705-residue chain is Elongation factor G (705 aa).

A tr-type G domain is found at 8–290 (ERYRNFGIMA…GVVHLLPSPA (283 aa)). GTP-binding positions include 17–24 (AHIDAGKT), 88–92 (DTPGH), and 142–145 (NKMD). A disordered region spans residues 290–309 (ADRPPVQGIDEDEKEDTRAA).

This sequence belongs to the TRAFAC class translation factor GTPase superfamily. Classic translation factor GTPase family. EF-G/EF-2 subfamily.

It is found in the cytoplasm. Catalyzes the GTP-dependent ribosomal translocation step during translation elongation. During this step, the ribosome changes from the pre-translocational (PRE) to the post-translocational (POST) state as the newly formed A-site-bound peptidyl-tRNA and P-site-bound deacylated tRNA move to the P and E sites, respectively. Catalyzes the coordinated movement of the two tRNA molecules, the mRNA and conformational changes in the ribosome. This Xanthomonas euvesicatoria pv. vesicatoria (strain 85-10) (Xanthomonas campestris pv. vesicatoria) protein is Elongation factor G.